Consider the following 61-residue polypeptide: MAKTALKNKAAAKPKFKVRAYTRCQVCGRPHSVYRKFGLCRICLREKAHRGELPGVTKSSW.

Positions 24, 27, 40, and 43 each coordinate Zn(2+).

The protein belongs to the universal ribosomal protein uS14 family. Zinc-binding uS14 subfamily. As to quaternary structure, part of the 30S ribosomal subunit. Contacts proteins S3 and S10. It depends on Zn(2+) as a cofactor.

Functionally, binds 16S rRNA, required for the assembly of 30S particles and may also be responsible for determining the conformation of the 16S rRNA at the A site. This Bifidobacterium adolescentis (strain ATCC 15703 / DSM 20083 / NCTC 11814 / E194a) protein is Small ribosomal subunit protein uS14.